Reading from the N-terminus, the 293-residue chain is Small ribosomal subunit biogenesis GTPase RsgA (293 aa).

Residues 63-223 (QNELVRPPVA…VADTPGFSAL (161 aa)) form the CP-type G domain. Residues 112–115 (SKID) and 166–174 (GQSGVGKSS) contribute to the GTP site. Zn(2+)-binding residues include cysteine 247, cysteine 252, histidine 254, and cysteine 260.

Belongs to the TRAFAC class YlqF/YawG GTPase family. RsgA subfamily. In terms of assembly, monomer. Associates with 30S ribosomal subunit, binds 16S rRNA. Zn(2+) is required as a cofactor.

It localises to the cytoplasm. In terms of biological role, one of several proteins that assist in the late maturation steps of the functional core of the 30S ribosomal subunit. Helps release RbfA from mature subunits. May play a role in the assembly of ribosomal proteins into the subunit. Circularly permuted GTPase that catalyzes slow GTP hydrolysis, GTPase activity is stimulated by the 30S ribosomal subunit. This chain is Small ribosomal subunit biogenesis GTPase RsgA, found in Geobacillus thermodenitrificans (strain NG80-2).